The following is a 421-amino-acid chain: MSNPNEPARALLPYLQRADELQKHEPLVAYYCRLYAMERGLKIPQSERTKTTNSILMSLINQLEKDKKSLTLSPDDNMHVEGFALSVFAKADKQDRAGRADLGTAKTFYAASIFFEILSQFGPVPPDIEQKHKYAAWKAADIRKAIKEGRKPTPGDPVDDDTDLSIPSSGPSGSYDHSASDTNTTSHHRTELDPPHDSNDDSSHHQFPEVPQHPLPPRFYDNPTNDYPADVPPPPPSSYPSNDHLPPPTGPSDSPYPHPYSHQPYHQDPPKHMPPPQNYSSHEPSPNSLPNFQSYPSFSESSLPSTSPHYPSHYQNPEPYYSSPHSAPAPSSTSFSSAPPPPPYSSNGRINIAPVLDPAPSSAQKYHYDSSYQPGPEKVAEALKAARFAVGALAFDEVSTAVEHLKKSLELLTNPSAGAGH.

Serine 2 bears the N-acetylserine mark. The disordered stretch occupies residues 146 to 374; the sequence is IKEGRKPTPG…KYHYDSSYQP (229 aa). Positions 165-185 are enriched in polar residues; it reads SIPSSGPSGSYDHSASDTNTT. Positions 188–207 are enriched in basic and acidic residues; the sequence is HRTELDPPHDSNDDSSHHQF. Over residues 245-258 the composition is skewed to pro residues; that stretch reads LPPPTGPSDSPYPH. Residues 278–293 are compositionally biased toward polar residues; that stretch reads NYSSHEPSPNSLPNFQ. Low complexity-rich tracts occupy residues 294–308 and 317–337; these read SYPS…STSP and PEPY…SFSS.

Belongs to the VTA1 family. Homodimer. Interacts with SKD1/VPS4, VPS60-1, CHMP1A and CHMP1B. Binds to PROS/At4g24370. Interacts with MPK6 and MPK3. In terms of processing, phosphorylated by activated MPK6 and MPK3, this activation is required to trigger multivesicular bodies (MVBs) trafficking upon plant infection.

The protein localises to the cytoplasm. The protein resides in the endosome membrane. It localises to the nucleus. It is found in the endosome. Its subcellular location is the multivesicular body. In terms of biological role, involved in the endosomal multivesicular bodies (MVB) pathway. MVBs contain intraluminal vesicles (ILVs) that are generated by invagination and scission from the limiting membrane of the endosome and are delivered to lysosomes enabling degradation of membrane proteins. Thought to be a cofactor of SKD1/VPS4, which catalyzes the disassembly of membrane-associated ESCRT-III. Target of pathogen-responsive mitogen-activated protein kinases (MPKs) that plays a critical role in plant basal resistance to Pseudomonas syringae in a SKD1-dependent manner by promoting multivesicular bodies (MVBs) trafficking upon plant infection. The protein is Protein HOMOLOG OF MAMMALIAN LYST-INTERACTING PROTEIN 5 of Arabidopsis thaliana (Mouse-ear cress).